The primary structure comprises 233 residues: Phosphoribosylaminoimidazole-succinocarboxamide synthase (233 aa).

It belongs to the SAICAR synthetase family.

It carries out the reaction 5-amino-1-(5-phospho-D-ribosyl)imidazole-4-carboxylate + L-aspartate + ATP = (2S)-2-[5-amino-1-(5-phospho-beta-D-ribosyl)imidazole-4-carboxamido]succinate + ADP + phosphate + 2 H(+). The protein operates within purine metabolism; IMP biosynthesis via de novo pathway; 5-amino-1-(5-phospho-D-ribosyl)imidazole-4-carboxamide from 5-amino-1-(5-phospho-D-ribosyl)imidazole-4-carboxylate: step 1/2. The sequence is that of Phosphoribosylaminoimidazole-succinocarboxamide synthase from Staphylococcus saprophyticus subsp. saprophyticus (strain ATCC 15305 / DSM 20229 / NCIMB 8711 / NCTC 7292 / S-41).